The primary structure comprises 388 residues: MKFVDEAVIKVQAGDGGNGVVSFWREKFVTKGGPDGGDGGDGGDVYIQADENLNTLIDYRFQRFYEAERGQNGSGGNCTGKRGKDITLRVPVGTRAVDIHTNEIVAEVAEHGKKVMVAKGGWHGLGNTRFKSSVNRAPRQKTMGTKGEIRELRLELLLLADVGMLGLPNAGKSTFIRAVSAAKPKVADYPFTTLIPSLGVVSVVPEKSFVVADIPGLIEGAADGAGLGIRFLKHLERCRVLLHMIDIFPIDQSDPVQNALTIIDELEQYSEKLANKPRWLVFNKVDLVSEEQADEIIQEVIDALGWEEQYFKISAVNRQGTKELCYKLADFMEQLPREEQEVSEEEKVNFMWDYHPDANQGEVITEDDDDWDDWDDEEDDGHVIYVRE.

The region spanning 1–159 (MKFVDEAVIK…RELRLELLLL (159 aa)) is the Obg domain. Residues 160-333 (ADVGMLGLPN…LCYKLADFME (174 aa)) form the OBG-type G domain. Residues 166-173 (GLPNAGKS), 191-195 (FTTLI), 213-216 (DIPG), 283-286 (NKVD), and 314-316 (SAV) each bind GTP. Ser-173 and Thr-193 together coordinate Mg(2+). The disordered stretch occupies residues 359–380 (NQGEVITEDDDDWDDWDDEEDD). Residues 364–380 (ITEDDDDWDDWDDEEDD) show a composition bias toward acidic residues.

It belongs to the TRAFAC class OBG-HflX-like GTPase superfamily. OBG GTPase family. Monomer. It depends on Mg(2+) as a cofactor.

Its subcellular location is the cytoplasm. Functionally, an essential GTPase which binds GTP, GDP and possibly (p)ppGpp with moderate affinity, with high nucleotide exchange rates and a fairly low GTP hydrolysis rate. Plays a role in control of the cell cycle, stress response, ribosome biogenesis and in those bacteria that undergo differentiation, in morphogenesis control. The chain is GTPase Obg from Vibrio vulnificus (strain YJ016).